The following is a 278-amino-acid chain: Diaminopimelate epimerase (278 aa).

Residues N13, Q49, and N68 each contribute to the substrate site. The Proton donor role is filled by C77. Substrate-binding positions include G78–N79, N161, N194, and E212–R213. C221 (proton acceptor) is an active-site residue. Substrate is bound at residue G222–T223.

This sequence belongs to the diaminopimelate epimerase family. In terms of assembly, homodimer.

The protein resides in the cytoplasm. It carries out the reaction (2S,6S)-2,6-diaminopimelate = meso-2,6-diaminopimelate. It participates in amino-acid biosynthesis; L-lysine biosynthesis via DAP pathway; DL-2,6-diaminopimelate from LL-2,6-diaminopimelate: step 1/1. In terms of biological role, catalyzes the stereoinversion of LL-2,6-diaminopimelate (L,L-DAP) to meso-diaminopimelate (meso-DAP), a precursor of L-lysine and an essential component of the bacterial peptidoglycan. This Nitrosomonas eutropha (strain DSM 101675 / C91 / Nm57) protein is Diaminopimelate epimerase.